Consider the following 559-residue polypeptide: Cytokine-like nuclear factor N-PAC (559 aa).

Residues 9 to 70 (VNDLVWAKMK…ETQIKPYQEF (62 aa)) enclose the PWWP domain. The tract at residues 106-137 (SEQDNRPDPDVEFNKLREGGTESGEETTVNNT) is disordered. Residues 108–125 (QDNRPDPDVEFNKLREGG) are compositionally biased toward basic and acidic residues. The interval 267-559 (RNIQASNLKF…SSAVYVRARF (293 aa)) is dehydrogenase domain. NAD(+)-binding positions include 277–291 (GFLGLGIMGCGMVKN) and K511.

This sequence belongs to the HIBADH-related family. NP60 subfamily. In terms of assembly, binds to mononucleosomes.

Its subcellular location is the chromosome. Its function is as follows. Nucleosome-destabilizing factor that is recruited to genes during transcriptional activation and colocalizes with a subset of trimethylated 'Lys-36' histone H3 (H3K36me3)-enriched regions. This chain is Cytokine-like nuclear factor N-PAC, found in Aedes aegypti (Yellowfever mosquito).